The chain runs to 478 residues: MSSGTLYDKVWDLHRVADLPGGSTQLFVGLHLIHEVTSPQAFAALQDKGLPVRCPERTVATVDHIVPTISQKRPFADPLAEEMLSTLERNCANYGIVLCGLGSGRQGIVHVIAPELGLTQPGMTVACGDSHTSTHGAFGAIAFGIGTSQVRDVLASQSLAMNKLKVRRIWVDGQLGSGVHAKDLILHVIRSLGVKAGVGYAYEFAGPAIDVLSMEERMTLCNMAIEGGARCGYVNPDGVTFDYLQGRFYAPTGEAWHRAVAWWSSLASDPNAVFDDEVMFDAASIAPMVTWGITPGQGIAVDESVPTIDSLEPNERPIAEEACRYMDLEPGMAIEGVPVDVCFIGSCTNGRLSDLKAAAAIAKGRHVAQGIKAFVVPGSEQVARAAEAEGLDGVFRKAGFEWREPGCSMCLAMNPDRLEGRQISASSSNRNFKGRQGSSRGRTLLMSPAMVAAAAITGQVTDVRKLISNTVPSKSFHQ.

Positions 347, 407, and 410 each coordinate [4Fe-4S] cluster.

Belongs to the aconitase/IPM isomerase family. LeuC type 1 subfamily. In terms of assembly, heterodimer of LeuC and LeuD. The cofactor is [4Fe-4S] cluster.

The catalysed reaction is (2R,3S)-3-isopropylmalate = (2S)-2-isopropylmalate. The protein operates within amino-acid biosynthesis; L-leucine biosynthesis; L-leucine from 3-methyl-2-oxobutanoate: step 2/4. Catalyzes the isomerization between 2-isopropylmalate and 3-isopropylmalate, via the formation of 2-isopropylmaleate. This Prochlorococcus marinus (strain MIT 9303) protein is 3-isopropylmalate dehydratase large subunit.